Here is a 416-residue protein sequence, read N- to C-terminus: Serine hydroxymethyltransferase (416 aa).

Residues L121 and 125–127 each bind (6S)-5,6,7,8-tetrahydrofolate; that span reads GHL. Position 229 is an N6-(pyridoxal phosphate)lysine (K229).

This sequence belongs to the SHMT family. Homodimer. Pyridoxal 5'-phosphate is required as a cofactor.

It localises to the cytoplasm. It carries out the reaction (6R)-5,10-methylene-5,6,7,8-tetrahydrofolate + glycine + H2O = (6S)-5,6,7,8-tetrahydrofolate + L-serine. It participates in one-carbon metabolism; tetrahydrofolate interconversion. Its pathway is amino-acid biosynthesis; glycine biosynthesis; glycine from L-serine: step 1/1. Catalyzes the reversible interconversion of serine and glycine with tetrahydrofolate (THF) serving as the one-carbon carrier. This reaction serves as the major source of one-carbon groups required for the biosynthesis of purines, thymidylate, methionine, and other important biomolecules. Also exhibits THF-independent aldolase activity toward beta-hydroxyamino acids, producing glycine and aldehydes, via a retro-aldol mechanism. This Bordetella avium (strain 197N) protein is Serine hydroxymethyltransferase.